We begin with the raw amino-acid sequence, 579 residues long: Probable cholinesterase (579 aa).

Positions 1–19 are cleaved as a signal peptide; it reads MTDHKIIMLLLLGIYCIQA. Asparagine 77 and asparagine 144 each carry an N-linked (GlcNAc...) asparagine; by host glycan. Residue serine 217 is the Acyl-ester intermediate of the active site. Asparagine 257, asparagine 269, and asparagine 283 each carry an N-linked (GlcNAc...) asparagine; by host glycan. Catalysis depends on glutamate 337, which acts as the Charge relay system. 2 N-linked (GlcNAc...) asparagine; by host glycosylation sites follow: asparagine 373 and asparagine 394. Catalysis depends on histidine 451, which acts as the Charge relay system. The N-linked (GlcNAc...) asparagine; by host glycan is linked to asparagine 469.

This sequence belongs to the type-B carboxylesterase/lipase family.

It carries out the reaction an acylcholine + H2O = a carboxylate + choline + H(+). Its function is as follows. May be involved in the disruption of the host membrane. The sequence is that of Probable cholinesterase from Acanthamoeba polyphaga mimivirus (APMV).